Here is a 283-residue protein sequence, read N- to C-terminus: Bifunctional protein FolD (283 aa).

NADP(+) is bound by residues 165–167 (GRS), S190, and V231.

This sequence belongs to the tetrahydrofolate dehydrogenase/cyclohydrolase family. In terms of assembly, homodimer.

The catalysed reaction is (6R)-5,10-methylene-5,6,7,8-tetrahydrofolate + NADP(+) = (6R)-5,10-methenyltetrahydrofolate + NADPH. It catalyses the reaction (6R)-5,10-methenyltetrahydrofolate + H2O = (6R)-10-formyltetrahydrofolate + H(+). It participates in one-carbon metabolism; tetrahydrofolate interconversion. In terms of biological role, catalyzes the oxidation of 5,10-methylenetetrahydrofolate to 5,10-methenyltetrahydrofolate and then the hydrolysis of 5,10-methenyltetrahydrofolate to 10-formyltetrahydrofolate. The sequence is that of Bifunctional protein FolD from Bacillus velezensis (strain DSM 23117 / BGSC 10A6 / LMG 26770 / FZB42) (Bacillus amyloliquefaciens subsp. plantarum).